Reading from the N-terminus, the 255-residue chain is MAFSLCWKAPRSQWSFLQALNSGFPLFPWRTVGSCLDLKMKAYLEENTEVTSSGSLTPEIQLRLLTPRCKFWWERADLWPYSDPYWAIYWPGGQALSRYLLDNPDVVRGKSVLDLGSGCGATAIAAKMSGASNILANDVDPIAGMAITLNCKLNGLNPFPILTKNILNTRQGKFDLIVLGDMFYDEDLADSLHLWLQNCFWAYGTRVLIGDPGRPQFSGHSIQHQLYQLAEYTLPEPTQQDNNGLTTSAVWDFHP.

The N-terminal 32 residues, 1-32 (MAFSLCWKAPRSQWSFLQALNSGFPLFPWRTV), are a transit peptide targeting the mitochondrion.

Belongs to the methyltransferase superfamily. ETFBKMT family. In terms of assembly, interacts with HSPD1; this protein may possibly be a methylation substrate.

The protein localises to the cytoplasm. The protein resides in the mitochondrion matrix. It catalyses the reaction L-lysyl-[protein] + 3 S-adenosyl-L-methionine = N(6),N(6),N(6)-trimethyl-L-lysyl-[protein] + 3 S-adenosyl-L-homocysteine + 3 H(+). Functionally, protein-lysine methyltransferase that selectively trimethylates the flavoprotein ETFB in mitochondria. Thereby, may negatively regulate the function of ETFB in electron transfer from Acyl-CoA dehydrogenases to the main respiratory chain. The chain is Electron transfer flavoprotein beta subunit lysine methyltransferase from Rattus norvegicus (Rat).